Here is a 37-residue protein sequence, read N- to C-terminus: MKVRPSVKPMCEKCKVIRRKGKVMVICENPKHKQKQG.

The protein belongs to the bacterial ribosomal protein bL36 family.

The sequence is that of Large ribosomal subunit protein bL36 from Listeria innocua serovar 6a (strain ATCC BAA-680 / CLIP 11262).